Reading from the N-terminus, the 1102-residue chain is MVKEMMKLAVFFISLLLILLISETTGLNLEGQYLLEIKSKFVDAKQNLRNWNSNDSVPCGWTGVMCSNYSSDPEVLSLNLSSMVLSGKLSPSIGGLVHLKQLDLSYNGLSGKIPKEIGNCSSLEILKLNNNQFDGEIPVEIGKLVSLENLIIYNNRISGSLPVEIGNLLSLSQLVTYSNNISGQLPRSIGNLKRLTSFRAGQNMISGSLPSEIGGCESLVMLGLAQNQLSGELPKEIGMLKKLSQVILWENEFSGFIPREISNCTSLETLALYKNQLVGPIPKELGDLQSLEFLYLYRNGLNGTIPREIGNLSYAIEIDFSENALTGEIPLELGNIEGLELLYLFENQLTGTIPVELSTLKNLSKLDLSINALTGPIPLGFQYLRGLFMLQLFQNSLSGTIPPKLGWYSDLWVLDMSDNHLSGRIPSYLCLHSNMIILNLGTNNLSGNIPTGITTCKTLVQLRLARNNLVGRFPSNLCKQVNVTAIELGQNRFRGSIPREVGNCSALQRLQLADNGFTGELPREIGMLSQLGTLNISSNKLTGEVPSEIFNCKMLQRLDMCCNNFSGTLPSEVGSLYQLELLKLSNNNLSGTIPVALGNLSRLTELQMGGNLFNGSIPRELGSLTGLQIALNLSYNKLTGEIPPELSNLVMLEFLLLNNNNLSGEIPSSFANLSSLLGYNFSYNSLTGPIPLLRNISMSSFIGNEGLCGPPLNQCIQTQPFAPSQSTGKPGGMRSSKIIAITAAVIGGVSLMLIALIVYLMRRPVRTVASSAQDGQPSEMSLDIYFPPKEGFTFQDLVAATDNFDESFVVGRGACGTVYKAVLPAGYTLAVKKLASNHEGGNNNNVDNSFRAEILTLGNIRHRNIVKLHGFCNHQGSNLLLYEYMPKGSLGEILHDPSCNLDWSKRFKIALGAAQGLAYLHHDCKPRIFHRDIKSNNILLDDKFEAHVGDFGLAKVIDMPHSKSMSAIAGSYGYIAPEYAYTMKVTEKSDIYSYGVVLLELLTGKAPVQPIDQGGDVVNWVRSYIRRDALSSGVLDARLTLEDERIVSHMLTVLKIALLCTSVSPVARPSMRQVVLMLIESERSEGEQEHLDTEELTQTTTP.

Residues 1–26 (MVKEMMKLAVFFISLLLILLISETTG) form the signal peptide. Over 27 to 737 (LNLEGQYLLE…GKPGGMRSSK (711 aa)) the chain is Extracellular. Residues N54, N68, N79, and N119 are each glycosylated (N-linked (GlcNAc...) asparagine). LRR repeat units follow at residues 72 to 96 (DPEVLSLNLSSMVLSGKLSPSIGGL), 97 to 120 (VHLKQLDLSYNGLSGKIPKEIGNC), 122 to 144 (SLEILKLNNNQFDGEIPVEIGKL), 145 to 170 (VSLENLIIYNNRISGSLPVEIGNLLS), 172 to 192 (SQLVTYSNNISGQLPRSIGNL), 193 to 216 (KRLTSFRAGQNMISGSLPSEIGGC), 217 to 241 (ESLVMLGLAQNQLSGELPKEIGMLK), 243 to 264 (LSQVILWENEFSGFIPREISNC), 265 to 288 (TSLETLALYKNQLVGPIPKELGDL), 289 to 312 (QSLEFLYLYRNGLNGTIPREIGNL), 314 to 336 (YAIEIDFSENALTGEIPLELGNI), 337 to 360 (EGLELLYLFENQLTGTIPVELSTL), 361 to 383 (KNLSKLDLSINALTGPIPLGFQY), 385 to 408 (RGLFMLQLFQNSLSGTIPPKLGWY), 409 to 432 (SDLWVLDMSDNHLSGRIPSYLCLH), 433 to 456 (SNMIILNLGTNNLSGNIPTGITTC), 458 to 480 (TLVQLRLARNNLVGRFPSNLCKQ), 481 to 504 (VNVTAIELGQNRFRGSIPREVGNC), 505 to 528 (SALQRLQLADNGFTGELPREIGML), 529 to 552 (SQLGTLNISSNKLTGEVPSEIFNC), 554 to 576 (MLQRLDMCCNNFSGTLPSEVGSL), 577 to 602 (YQLELLKLSNNNLSGTIPVALGNLSR), 604 to 624 (TELQMGGNLFNGSIPRELGSL), 625 to 649 (TGLQIALNLSYNKLTGEIPPELSNL), 651 to 672 (MLEFLLLNNNNLSGEIPSSFAN), and 674 to 700 (SSLLGYNFSYNSLTGPIPLLRNISMSS). An N-linked (GlcNAc...) asparagine glycan is attached at N180. A glycan (N-linked (GlcNAc...) asparagine) is linked at N263. N302 and N311 each carry an N-linked (GlcNAc...) asparagine glycan. N362 carries an N-linked (GlcNAc...) asparagine glycan. N-linked (GlcNAc...) asparagine glycosylation occurs at N444. N482 and N503 each carry an N-linked (GlcNAc...) asparagine glycan. N-linked (GlcNAc...) asparagine glycans are attached at residues N535, N564, N588, N599, N614, N632, N661, N672, N680, and N695. A helical transmembrane segment spans residues 738–758 (IIAITAAVIGGVSLMLIALIV). At 759–1102 (YLMRRPVRTV…TEELTQTTTP (344 aa)) the chain is on the cytoplasmic side. A phosphothreonine mark is found at T793 and T801. The Protein kinase domain maps to 804–1091 (FDESFVVGRG…ERSEGEQEHL (288 aa)). ATP-binding positions include 810 to 818 (VGRGACGTV) and K832. Phosphotyrosine occurs at positions 882 and 919. The Proton acceptor role is filled by D932. Phosphoserine is present on S966. Phosphotyrosine is present on residues Y974 and Y981. T982 carries the post-translational modification Phosphothreonine.

The protein belongs to the protein kinase superfamily. Ser/Thr protein kinase family.

The protein localises to the cell membrane. The enzyme catalyses L-seryl-[protein] + ATP = O-phospho-L-seryl-[protein] + ADP + H(+). It carries out the reaction L-threonyl-[protein] + ATP = O-phospho-L-threonyl-[protein] + ADP + H(+). This chain is Probable leucine-rich repeat receptor-like protein kinase At5g63930, found in Arabidopsis thaliana (Mouse-ear cress).